The sequence spans 151 residues: UPF0735 ACT domain-containing protein SAUSA300_1599 (151 aa).

Residues 74 to 149 enclose the ACT domain; sequence TLILYVTDIV…YVSKVELISM (76 aa).

This sequence belongs to the UPF0735 family.

This Staphylococcus aureus (strain USA300) protein is UPF0735 ACT domain-containing protein SAUSA300_1599.